We begin with the raw amino-acid sequence, 305 residues long: Transmembrane epididymal protein 1A (305 aa).

Residues 4–24 form a helical membrane-spanning segment; that stretch reads FIGHISPGLFLVFYGLYQAVI. N-linked (GlcNAc...) asparagine glycosylation is present at asparagine 32. 5 helical membrane passes run 54–74, 124–144, 159–179, 187–207, and 223–243; these read IAHA…YEIS, CVLL…LLLV, SLLI…LWAP, IETF…FILF, and IMFV…CMLG. Residues 285–305 are disordered; the sequence is EQQDKDDQAPLLSKISPCDRA.

The protein belongs to the TMEM45 family.

The protein resides in the membrane. This Mus musculus (Mouse) protein is Transmembrane epididymal protein 1A.